We begin with the raw amino-acid sequence, 656 residues long: Replication protein A 70 kDa DNA-binding subunit A (656 aa).

Positions 225 to 307 (AIKARVTAKG…NHLNNEWEIL (83 aa)) form a DNA-binding region, OB. The C4-type zinc-finger motif lies at 516–542 (CPNMIGDRQCNKKVTKSTNGNWTCDKC).

The protein belongs to the replication factor A protein 1 family. As to quaternary structure, heterotrimer of RPA1, RPA2 and RPA3 (canonical replication protein A complex). Interacts with RPA2B. Expressed in root tips, roots, shoot apical meristem (SAM), young leaves, flag leaves and ears, and at lower levels in mature leaves.

It is found in the nucleus. Functionally, component of the replication protein A complex (RPA) required for DNA recombination, repair and replication. The activity of RPA is mediated by single-stranded DNA binding and protein interactions. Plays an essential role in meiotic and somatic DNA repair, but is dispensable for DNA replication and homologous recombination. Is essential for normal progression through meiosis in pollen mother cells. Is involved in repair of double-strand DNA breaks (DSBs) induced by genotoxic stresses. This chain is Replication protein A 70 kDa DNA-binding subunit A (RPA1A), found in Oryza sativa subsp. japonica (Rice).